The chain runs to 491 residues: Fatty acyl-CoA reductase 1 (491 aa).

The protein belongs to the fatty acyl-CoA reductase family. Expressed in the endodermal cell layer surrounding the central vasculature in roots. Expressed in the hilum region of seeds. Expressed in lateral root tips, cotyledons, the shoot apex, young leaves, petals, stamen filaments, and receptacle of siliques.

The enzyme catalyses a long-chain fatty acyl-CoA + 2 NADPH + 2 H(+) = a long-chain primary fatty alcohol + 2 NADP(+) + CoA. In terms of biological role, catalyzes the reduction of fatty acyl-CoA to fatty alcohols. Catalyzes specifically the formation of C18:0 and C22:0 fatty alcohols. Provides the fatty alcohols required for synthesis of suberin in roots, seed coat and wound-induced leaf tissue. Provides the fatty alcohols required for synthesis of alkyl hydroxycinnamates in root waxes. The protein is Fatty acyl-CoA reductase 1 of Arabidopsis thaliana (Mouse-ear cress).